Consider the following 98-residue polypeptide: NADH-ubiquinone oxidoreductase chain 4L (98 aa).

A run of 3 helical transmembrane segments spans residues 1–21, 29–49, and 58–78; these read MPLI…GMLV, SLLC…LMTL, and IMPI…LALL.

Belongs to the complex I subunit 4L family. Core subunit of respiratory chain NADH dehydrogenase (Complex I) which is composed of 45 different subunits.

It is found in the mitochondrion inner membrane. The catalysed reaction is a ubiquinone + NADH + 5 H(+)(in) = a ubiquinol + NAD(+) + 4 H(+)(out). Functionally, core subunit of the mitochondrial membrane respiratory chain NADH dehydrogenase (Complex I) which catalyzes electron transfer from NADH through the respiratory chain, using ubiquinone as an electron acceptor. Part of the enzyme membrane arm which is embedded in the lipid bilayer and involved in proton translocation. The chain is NADH-ubiquinone oxidoreductase chain 4L (MT-ND4L) from Pongo abelii (Sumatran orangutan).